Here is a 936-residue protein sequence, read N- to C-terminus: Protocadherin alpha-5 (936 aa).

Residues Met1–Gly28 form the signal peptide. Residues Gln29–Asn696 are Extracellular-facing. Cadherin domains are found at residues Ser33–Phe132, Ala156–Phe241, Asp242–Met349, Ala350–Phe454, Ala455–Leu564, and Val580–Ala677. N-linked (GlcNAc...) asparagine glycosylation occurs at Asn264. Residue Asn547 is glycosylated (N-linked (GlcNAc...) asparagine). The chain crosses the membrane as a helical span at residues Val697–Tyr717. The Cytoplasmic segment spans residues Thr718–Gln936. Disordered regions lie at residues Ser759–Arg793 and Ala816–Gln936. 5 PXXP repeats span residues Pro773–Pro776, Pro785–Pro788, Pro818–Pro821, Lys873–Ile876, and Pro877–Thr890. Positions Pro773–Thr890 are 5 X 4 AA repeats of P-X-X-P. Positions Ser774 to Arg786 are enriched in polar residues. A compositionally biased stretch (basic and acidic residues) spans Asp895–Lys909.

Its subcellular location is the cell membrane. Potential calcium-dependent cell-adhesion protein. May be involved in the establishment and maintenance of specific neuronal connections in the brain. This Homo sapiens (Human) protein is Protocadherin alpha-5 (PCDHA5).